A 1413-amino-acid polypeptide reads, in one-letter code: ABC-type transporter vrcC (1413 aa).

Residues 108 to 365 (VWFEALALAR…FLDMGFACPE (258 aa)) form the ABC transporter 1 domain. N-linked (GlcNAc...) asparagine glycosylation occurs at Asn-289. A helical transmembrane segment spans residues 476–496 (VTISSLIGNVITALVIASIFY). N-linked (GlcNAc...) asparagine glycosylation occurs at Asn-501. The next 2 helical transmembrane spans lie at 510–530 (ALLFFACLINALGCGLEMLTL) and 564–584 (VLNAILSLVQALPFCAVVLLG). N-linked (GlcNAc...) asparagine glycosylation occurs at Asn-675. Residues 683–703 (IGIILAFMVVLGAIYLVATDF) form a helical membrane-spanning segment. The disordered stretch occupies residues 725–748 (SGKPDDFEGGSDRNASQEKSKSDR). Asn-738 is a glycosylation site (N-linked (GlcNAc...) asparagine). A compositionally biased stretch (basic and acidic residues) spans 739–748 (ASQEKSKSDR). The 243-residue stretch at 761–1003 (FQWQDVCFDI…ILIDYFVRNG (243 aa)) folds into the ABC transporter 2 domain. A run of 6 helical transmembrane segments spans residues 1105–1125 (IYIYSKAILCVLPALFVGFSL), 1142–1162 (IFLLLIQFGQLIQQIMPHFVT), 1191–1211 (LFWNSLMSILMFLCWYYPIGM), 1230–1250 (LLIWTFLLFSSTFAHFMIAAL), 1266–1286 (LCLLFCGVLATPAQLPGFWIF), and 1290–1310 (VSPFTYLVSGMLAVGIADTTV). A glycan (N-linked (GlcNAc...) asparagine) is linked at Asn-1324. A helical transmembrane segment spans residues 1378–1398 (FGLMWVFIFTNIVAACLLYWW).

The protein belongs to the ABC transporter superfamily. ABCG family. PDR (TC 3.A.1.205) subfamily.

The protein resides in the cell membrane. Functionally, ABC-type transporter; part of the gene cluster that mediates the biosynthesis of the sesterterpene variecolin. VrcC is probably involved in the secretion of variecolin. The polypeptide is ABC-type transporter vrcC (Aspergillus aculeatus (strain ATCC 16872 / CBS 172.66 / WB 5094)).